The primary structure comprises 86 residues: Translation initiation factor IF-1 3 (86 aa).

The region spanning methionine 1 to isoleucine 72 is the S1-like domain.

This sequence belongs to the IF-1 family. As to quaternary structure, component of the 30S ribosomal translation pre-initiation complex which assembles on the 30S ribosome in the order IF-2 and IF-3, IF-1 and N-formylmethionyl-tRNA(fMet); mRNA recruitment can occur at any time during PIC assembly.

The protein localises to the cytoplasm. Functionally, one of the essential components for the initiation of protein synthesis. Stabilizes the binding of IF-2 and IF-3 on the 30S subunit to which N-formylmethionyl-tRNA(fMet) subsequently binds. Helps modulate mRNA selection, yielding the 30S pre-initiation complex (PIC). Upon addition of the 50S ribosomal subunit IF-1, IF-2 and IF-3 are released leaving the mature 70S translation initiation complex. The polypeptide is Translation initiation factor IF-1 3 (Acidovorax sp. (strain JS42)).